Consider the following 1412-residue polypeptide: DNA-directed RNA polymerase subunit beta' (1412 aa).

4 residues coordinate Zn(2+): C70, C72, C85, and C88. Mg(2+) contacts are provided by D460, D462, and D464. Residues C819, C893, C900, and C903 each contribute to the Zn(2+) site. The disordered stretch occupies residues 1393–1412 (EAFEFGTPSAPAEEPQHPAE).

Belongs to the RNA polymerase beta' chain family. The RNAP catalytic core consists of 2 alpha, 1 beta, 1 beta' and 1 omega subunit. When a sigma factor is associated with the core the holoenzyme is formed, which can initiate transcription. Mg(2+) is required as a cofactor. Zn(2+) serves as cofactor.

The enzyme catalyses RNA(n) + a ribonucleoside 5'-triphosphate = RNA(n+1) + diphosphate. Its function is as follows. DNA-dependent RNA polymerase catalyzes the transcription of DNA into RNA using the four ribonucleoside triphosphates as substrates. This is DNA-directed RNA polymerase subunit beta' from Burkholderia pseudomallei (strain 1106a).